A 715-amino-acid polypeptide reads, in one-letter code: Phosphatidylinositol 4-phosphate 5-kinase 6 (715 aa).

Residues 1 to 13 (MSVAHADDADDYS) are compositionally biased toward basic and acidic residues. Residues 1–21 (MSVAHADDADDYSRPTGESYH) form a disordered region. MORN repeat units follow at residues 32 to 54 (YTGQ…DGCM), 55 to 77 (YVGD…SGAT), 78 to 100 (YEGD…SGDL), 101 to 123 (YRGS…NGDC), 124 to 146 (YDGE…NENH), 147 to 169 (YIGQ…NGNR), 170 to 192 (YDGS…DGSF), and 193 to 214 (YVGV…STSS). The tract at residues 253-306 (GASEQSSSGNRTKNSERPRRRSVDGRVSNGEMELRSNGSGYLQVDDNAESTRSS) is disordered. Residues 255 to 264 (SEQSSSGNRT) show a composition bias toward polar residues. Over residues 265–276 (KNSERPRRRSVD) the composition is skewed to basic and acidic residues. Residues 321–711 (TISKGHKNYE…RFRDFIFRVF (391 aa)) form the PIPK domain. Residues 671–692 (YDISKKLEHAYKSMQYDPTSIS) form an activation loop region.

It catalyses the reaction a 1,2-diacyl-sn-glycero-3-phospho-(1D-myo-inositol 4-phosphate) + ATP = a 1,2-diacyl-sn-glycero-3-phospho-(1D-myo-inositol-4,5-bisphosphate) + ADP + H(+). This is Phosphatidylinositol 4-phosphate 5-kinase 6 (PIP5K6) from Arabidopsis thaliana (Mouse-ear cress).